A 138-amino-acid polypeptide reads, in one-letter code: Glutaredoxin-C7 (138 aa).

The segment at serine 17–glutamine 40 is disordered. Positions alanine 42–cysteine 137 constitute a Glutaredoxin domain. Cysteines 62 and 65 form a disulfide.

It belongs to the glutaredoxin family. CC-type subfamily.

It localises to the cytoplasm. Functionally, has a glutathione-disulfide oxidoreductase activity in the presence of NADPH and glutathione reductase. Reduces low molecular weight disulfides and proteins. The polypeptide is Glutaredoxin-C7 (GRXC7) (Oryza sativa subsp. japonica (Rice)).